The primary structure comprises 162 residues: Cyclic pyranopterin monophosphate synthase (162 aa).

Substrate-binding positions include 75–77 and 113–114; these read LCH and ME. D128 is an active-site residue.

The protein belongs to the MoaC family. Homohexamer; trimer of dimers.

The enzyme catalyses (8S)-3',8-cyclo-7,8-dihydroguanosine 5'-triphosphate = cyclic pyranopterin phosphate + diphosphate. It participates in cofactor biosynthesis; molybdopterin biosynthesis. Functionally, catalyzes the conversion of (8S)-3',8-cyclo-7,8-dihydroguanosine 5'-triphosphate to cyclic pyranopterin monophosphate (cPMP). The protein is Cyclic pyranopterin monophosphate synthase of Burkholderia orbicola (strain MC0-3).